An 880-amino-acid chain; its full sequence is Protein translocase subunit SecA (880 aa).

ATP contacts are provided by residues Gln87, 105-109 (GEGKT), and Asp501. Zn(2+) contacts are provided by Cys864, Cys866, Cys875, and His876.

This sequence belongs to the SecA family. As to quaternary structure, monomer and homodimer. Part of the essential Sec protein translocation apparatus which comprises SecA, SecYEG and auxiliary proteins SecDF-YajC and YidC. The cofactor is Zn(2+).

The protein resides in the cell inner membrane. Its subcellular location is the cytoplasm. It catalyses the reaction ATP + H2O + cellular proteinSide 1 = ADP + phosphate + cellular proteinSide 2.. Part of the Sec protein translocase complex. Interacts with the SecYEG preprotein conducting channel. Has a central role in coupling the hydrolysis of ATP to the transfer of proteins into and across the cell membrane, serving both as a receptor for the preprotein-SecB complex and as an ATP-driven molecular motor driving the stepwise translocation of polypeptide chains across the membrane. In Orientia tsutsugamushi (strain Boryong) (Rickettsia tsutsugamushi), this protein is Protein translocase subunit SecA.